We begin with the raw amino-acid sequence, 176 residues long: Ribosome maturation factor RimM (176 aa).

A PRC barrel domain is found at 97–176; it reads EDEFYWRDLI…QILVDWDPDF (80 aa).

The protein belongs to the RimM family. As to quaternary structure, binds ribosomal protein uS19.

The protein localises to the cytoplasm. Its function is as follows. An accessory protein needed during the final step in the assembly of 30S ribosomal subunit, possibly for assembly of the head region. Essential for efficient processing of 16S rRNA. May be needed both before and after RbfA during the maturation of 16S rRNA. It has affinity for free ribosomal 30S subunits but not for 70S ribosomes. The sequence is that of Ribosome maturation factor RimM from Shewanella putrefaciens (strain CN-32 / ATCC BAA-453).